Reading from the N-terminus, the 207-residue chain is Small ribosomal subunit protein uS4 (207 aa).

In terms of domain architecture, S4 RNA-binding spans 97–165 (SRLDNLVFRM…VKLALESKAV (69 aa)).

This sequence belongs to the universal ribosomal protein uS4 family. In terms of assembly, part of the 30S ribosomal subunit. Contacts protein S5. The interaction surface between S4 and S5 is involved in control of translational fidelity.

Functionally, one of the primary rRNA binding proteins, it binds directly to 16S rRNA where it nucleates assembly of the body of the 30S subunit. In terms of biological role, with S5 and S12 plays an important role in translational accuracy. This Mycoplasmoides gallisepticum (strain R(low / passage 15 / clone 2)) (Mycoplasma gallisepticum) protein is Small ribosomal subunit protein uS4.